The sequence spans 722 residues: Ataxin-7-like protein 2 (722 aa).

Disordered regions lie at residues 106 to 228, 288 to 317, 347 to 403, and 531 to 600; these read LSKL…PPKT, NSRKGESPKEKSPGRKEQVLERPSQELPSS, SRAS…DCHY, and AITS…GCRG. Over residues 181-191 the composition is skewed to pro residues; the sequence is GKPPMAPPSKE. The SCA7 domain maps to 230–297; that stretch reads RKMARKECDL…NSRKGESPKE (68 aa). Positions 290–311 are enriched in basic and acidic residues; sequence RKGESPKEKSPGRKEQVLERPS. Positions 541 to 556 are enriched in low complexity; it reads PSPSFSKLPPSKASKS. Residues 558-569 show a composition bias toward basic and acidic residues; the sequence is KGKDGVEVEAPS. S575 is modified (phosphoserine).

The polypeptide is Ataxin-7-like protein 2 (ATXN7L2) (Homo sapiens (Human)).